A 157-amino-acid polypeptide reads, in one-letter code: Protein FAM219A (157 aa).

The residue at position 1 (Met1) is an N-acetylmethionine. A disordered region spans residues 1–103 (MMEEIDRFQD…SRYSSSGYSS (103 aa)). Residues 17–33 (SDRDCDAREEKQRELAR) show a composition bias toward basic and acidic residues. Positions 38–52 (KNGSMGSPVNQQPKK) are enriched in polar residues. Phosphoserine is present on residues Ser44 and Ser74. Position 85 is a phosphothreonine (Thr85). Phosphoserine is present on residues Ser87 and Ser94. Residues 94 to 103 (SRYSSSGYSS) are compositionally biased toward low complexity.

This sequence belongs to the FAM219 family.

This Mus musculus (Mouse) protein is Protein FAM219A (Fam219a).